Consider the following 284-residue polypeptide: Succinate dehydrogenase [ubiquinone] iron-sulfur subunit, mitochondrial (284 aa).

Residues 1-26 (MAAVVFSLRRSGPVFRLPGVLQVCRG) constitute a mitochondrion transit peptide. Residues 44–137 (KKFAIYRWDP…VSKIYPLPHM (94 aa)) form the 2Fe-2S ferredoxin-type domain. C97, C102, C105, and C117 together coordinate [2Fe-2S] cluster. One can recognise a 4Fe-4S ferredoxin-type domain in the interval 180-210 (DRDKLDGLYECILCACCSTSCPSYWWNADKY). The [4Fe-4S] cluster site is built by C190, C193, and C196. C200 lines the [3Fe-4S] cluster pocket. W205 lines the a ubiquinone pocket. Residues C247 and C253 each coordinate [3Fe-4S] cluster. [4Fe-4S] cluster is bound at residue C257.

The protein belongs to the succinate dehydrogenase/fumarate reductase iron-sulfur protein family. As to quaternary structure, component of complex II composed of four subunits: the flavoprotein (FP) sdha, iron-sulfur protein (IP) sdhb, and a cytochrome b composed of sdhc and sdhd. [2Fe-2S] cluster serves as cofactor. Requires [3Fe-4S] cluster as cofactor. [4Fe-4S] cluster is required as a cofactor.

The protein localises to the mitochondrion inner membrane. It catalyses the reaction a quinone + succinate = fumarate + a quinol. The enzyme catalyses (R)-malate + a quinone = enol-oxaloacetate + a quinol. It carries out the reaction (S)-malate + a quinone = enol-oxaloacetate + a quinol. The protein operates within carbohydrate metabolism; tricarboxylic acid cycle; fumarate from succinate (eukaryal route): step 1/1. With respect to regulation, enol-oxaloacetate inhibits the succinate dehydrogenase activity. Iron-sulfur protein (IP) subunit of the succinate dehydrogenase complex (mitochondrial respiratory chain complex II), responsible for transferring electrons from succinate to ubiquinone (coenzyme Q). SDH also oxidizes malate to the non-canonical enol form of oxaloacetate, enol-oxaloacetate. Enol-oxaloacetate, which is a potent inhibitor of the succinate dehydrogenase activity, is further isomerized into keto-oxaloacetate. The chain is Succinate dehydrogenase [ubiquinone] iron-sulfur subunit, mitochondrial (sdhb) from Xenopus tropicalis (Western clawed frog).